The following is a 284-amino-acid chain: Bifunctional protein FolD (284 aa).

Residues glycine 166–serine 168 and isoleucine 232 each bind NADP(+).

The protein belongs to the tetrahydrofolate dehydrogenase/cyclohydrolase family. As to quaternary structure, homodimer.

The catalysed reaction is (6R)-5,10-methylene-5,6,7,8-tetrahydrofolate + NADP(+) = (6R)-5,10-methenyltetrahydrofolate + NADPH. The enzyme catalyses (6R)-5,10-methenyltetrahydrofolate + H2O = (6R)-10-formyltetrahydrofolate + H(+). It functions in the pathway one-carbon metabolism; tetrahydrofolate interconversion. In terms of biological role, catalyzes the oxidation of 5,10-methylenetetrahydrofolate to 5,10-methenyltetrahydrofolate and then the hydrolysis of 5,10-methenyltetrahydrofolate to 10-formyltetrahydrofolate. The sequence is that of Bifunctional protein FolD from Shewanella halifaxensis (strain HAW-EB4).